The following is a 223-amino-acid chain: Adenylate kinase 4, mitochondrial (223 aa).

A ribonucleoside 5'-triphosphate is bound at residue Gly-15–Thr-20. The NMP stretch occupies residues Ser-35 to Val-64. AMP-binding residues include Ser-36 and Arg-41. At Lys-60 the chain carries N6-succinyllysine. AMP is bound by residues Leu-62–Val-64, Gly-89–Arg-92, and Gln-96. Positions Arg-125 to Asp-162 are LID. A ribonucleoside 5'-triphosphate contacts are provided by residues Arg-126 and Val-135–Tyr-136. Residue Arg-170 coordinates AMP. The residue at position 175 (Lys-175) is an N6-acetyllysine. Lys-179 and Lys-186 each carry N6-acetyllysine; alternate. N6-succinyllysine; alternate is present on residues Lys-179 and Lys-186. Thr-199 provides a ligand contact to a ribonucleoside 5'-triphosphate.

It belongs to the adenylate kinase family. AK3 subfamily. Monomer. Interacts with SLC25A5/ANT2. As to expression, expressed in kidney, liver, stomach, brain, spinal cord, heart, ovary, oviduct, colon, jejunum, ileum and testis (at protein level). In the brain, expressed in the pyramidal cells of the cerebrum and glial cells in the cerebellum (at protein level). In the heart, expressed by myocytes (at protein level). In the kidney, expressed in the proximal to distal tubule in the cortex and the outer and inner zones of the medulla (at protein level). In the stomach, expressed in stratified squamous epithelia in the forestomach and in the gastric pit and mucus producing cells of the glandular stomach (at protein level). Expressed in epithelial cells of the jejunum, ileum, and colon (at protein level). In the testis, expressed by spermatocytes (at protein level). In the ovaries, expressed by oocytes, follicular epithelial cells, and corpus luteum cells (at protein level). In the oviduct, expressed in the epithelia of the isthmus and the ciliated cells of the ampulla (at protein level). Expressed in the pyramidal cells in the hippocampus.

It is found in the mitochondrion matrix. It carries out the reaction a ribonucleoside 5'-phosphate + ATP = a ribonucleoside 5'-diphosphate + ADP. The enzyme catalyses AMP + ATP = 2 ADP. The catalysed reaction is GTP + AMP = GDP + ADP. It catalyses the reaction CMP + ATP = CDP + ADP. It carries out the reaction GTP + CMP = CDP + GDP. The enzyme catalyses dAMP + ATP = dADP + ADP. The catalysed reaction is dCMP + ATP = dCDP + ADP. It catalyses the reaction a 2'-deoxyribonucleoside 5'-diphosphate + ATP = a 2'-deoxyribonucleoside 5'-triphosphate + ADP. It carries out the reaction a ribonucleoside 5'-diphosphate + ATP = a ribonucleoside 5'-triphosphate + ADP. The enzyme catalyses GDP + ATP = GTP + ADP. The catalysed reaction is CDP + GTP = CTP + GDP. It catalyses the reaction CDP + ATP = CTP + ADP. It carries out the reaction UDP + ATP = UTP + ADP. The enzyme catalyses GTP + UDP = UTP + GDP. The catalysed reaction is dADP + GTP = dATP + GDP. It catalyses the reaction dCDP + GTP = dCTP + GDP. It carries out the reaction dCDP + ATP = dCTP + ADP. The enzyme catalyses dGDP + ATP = dGTP + ADP. The catalysed reaction is dTDP + GTP = dTTP + GDP. It catalyses the reaction dTDP + ATP = dTTP + ADP. Broad-specificity mitochondrial nucleoside phosphate kinase involved in cellular nucleotide homeostasis by catalyzing nucleoside-phosphate interconversions. Similar to other adenylate kinases, preferentially catalyzes the phosphorylation of the nucleoside monophosphate AMP with ATP as phosphate donor to produce ADP. Phosphorylates only AMP when using GTP as phosphate donor. In vitro, can also catalyze the phosphorylation of CMP, dAMP and dCMP and use GTP as an alternate phosphate donor. Moreover, exhibits a diphosphate kinase activity, producing ATP, CTP, GTP, UTP, TTP, dATP, dCTP and dGTP from the corresponding diphosphate substrates with either ATP or GTP as phosphate donors. Plays a role in controlling cellular ATP levels by regulating phosphorylation and activation of the energy sensor protein kinase AMPK. Plays a protective role in the cellular response to oxidative stress. The sequence is that of Adenylate kinase 4, mitochondrial from Mus musculus (Mouse).